The chain runs to 915 residues: Probable inorganic carbon transporter subunit DabA (915 aa).

Cys-392, Asp-394, His-566, and Cys-581 together coordinate Zn(2+).

This sequence belongs to the inorganic carbon transporter (TC 9.A.2) DabA family. In terms of assembly, forms a complex with DabB. It depends on Zn(2+) as a cofactor.

It is found in the cell inner membrane. In terms of biological role, part of an energy-coupled inorganic carbon pump. This chain is Probable inorganic carbon transporter subunit DabA, found in Nitrosospira multiformis (strain ATCC 25196 / NCIMB 11849 / C 71).